Here is a 205-residue protein sequence, read N- to C-terminus: Large ribosomal subunit protein uL4 (205 aa).

The segment at 45–97 (RQGTSAVKNRSAVRGGGKKPWRQKGTGRARQGSIRAPQWRGGGTVFGPTPRSY) is disordered. Positions 60–71 (GGKKPWRQKGTG) are enriched in basic residues.

It belongs to the universal ribosomal protein uL4 family. As to quaternary structure, part of the 50S ribosomal subunit.

One of the primary rRNA binding proteins, this protein initially binds near the 5'-end of the 23S rRNA. It is important during the early stages of 50S assembly. It makes multiple contacts with different domains of the 23S rRNA in the assembled 50S subunit and ribosome. Its function is as follows. Forms part of the polypeptide exit tunnel. In Lactobacillus johnsonii (strain CNCM I-12250 / La1 / NCC 533), this protein is Large ribosomal subunit protein uL4.